The sequence spans 940 residues: Mitogen-activated protein kinase kinase kinase 10 (940 aa).

The 66-residue stretch at proline 16–proline 81 folds into the SH3 domain. The Protein kinase domain maps to leucine 98–isoleucine 360. ATP contacts are provided by residues isoleucine 104 to valine 112 and lysine 125. Residue aspartate 222 is the Proton acceptor of the active site. A Phosphothreonine; by autocatalysis modification is found at threonine 258. Serine 262 carries the post-translational modification Phosphoserine; by autocatalysis and MAP4K1. Leucine-zipper regions lie at residues isoleucine 384–leucine 405 and leucine 419–leucine 440. Disordered regions lie at residues proline 490 to glycine 599, arginine 687 to proline 734, and serine 749 to leucine 917. Residues serine 498, serine 502, and serine 506 each carry the phosphoserine modification. The segment covering alanine 501–proline 511 has biased composition (low complexity). Threonine 552 bears the Phosphothreonine mark. Basic and acidic residues-rich tracts occupy residues glutamine 560–alanine 572 and arginine 687–leucine 698. The segment covering alanine 765 to proline 775 has biased composition (pro residues). Residues leucine 822–aspartate 840 are compositionally biased toward basic and acidic residues. Residue arginine 843 is modified to Omega-N-methylarginine. Residues proline 899 to valine 913 show a composition bias toward pro residues.

The protein belongs to the protein kinase superfamily. STE Ser/Thr protein kinase family. MAP kinase kinase kinase subfamily. Homodimer. Interacts with SH3RF2. It depends on Mg(2+) as a cofactor. Post-translationally, autophosphorylation on serine and threonine residues within the activation loop plays a role in enzyme activation.

It carries out the reaction L-seryl-[protein] + ATP = O-phospho-L-seryl-[protein] + ADP + H(+). The enzyme catalyses L-threonyl-[protein] + ATP = O-phospho-L-threonyl-[protein] + ADP + H(+). Homodimerization via the leucine zipper domains is required for autophosphorylation and subsequent activation. Functionally, activates the JUN N-terminal pathway. The sequence is that of Mitogen-activated protein kinase kinase kinase 10 (Map3k10) from Mus musculus (Mouse).